A 775-amino-acid chain; its full sequence is Protein STRUBBELIG-RECEPTOR FAMILY 1 (775 aa).

A signal peptide spans 1–31 (MRSMRSGRDNNICFLGFLSFALISLPSLSLA). Residues 32–314 (LTNPDDVAAI…GKEDSFTSKR (283 aa)) are Extracellular-facing. 6 LRR repeats span residues 101–122 (SLKA…TLPV), 123–146 (SLQN…SSLK), 147–169 (SLSV…FQDL), 171–193 (LMIN…MQNL), 195–217 (TLTS…QDLP), and 218–238 (LKDL…KLLS). N-linked (GlcNAc...) asparagine glycosylation is present at N133. N-linked (GlcNAc...) asparagine glycosylation is found at N181 and N192. The N-linked (GlcNAc...) asparagine glycan is linked to N250. The disordered stretch occupies residues 254 to 308 (APSPSPETPPSPTSPKRPFFGPPSPNASAGHGQAHVRSPPSDHHPSRPTPQGKED). The segment covering 256-278 (SPSPETPPSPTSPKRPFFGPPSP) has biased composition (pro residues). Residue N279 is glycosylated (N-linked (GlcNAc...) asparagine). The helical transmembrane segment at 315 to 335 (IIWISILGAFSFVVLALVCLL) threads the bilayer. Residues 336 to 775 (CGRKCLRKRE…NGDNQYTGRR (440 aa)) lie on the Cytoplasmic side of the membrane. The tract at residues 345 to 414 (EDSEQLSKPH…VGSESKQESH (70 aa)) is disordered. Residues 367-379 (RSNASMLPPSNTF) show a composition bias toward polar residues. Basic and acidic residues predominate over residues 380-391 (NKDKEARPKERV). The Protein kinase domain maps to 478–756 (FSHENLIGTG…EVVQDLSDMI (279 aa)).

It belongs to the protein kinase superfamily. Ser/Thr protein kinase family. In terms of tissue distribution, expressed in roots, stems, leaves and flowers. Low expression in seedlings and siliques.

It localises to the membrane. Its function is as follows. Not essential for epidermal patterning and not redundant with STRUBBELIG. This chain is Protein STRUBBELIG-RECEPTOR FAMILY 1 (SRF1), found in Arabidopsis thaliana (Mouse-ear cress).